The primary structure comprises 141 residues: Large ribosomal subunit protein uL11 (141 aa).

Belongs to the universal ribosomal protein uL11 family. Part of the ribosomal stalk of the 50S ribosomal subunit. Interacts with L10 and the large rRNA to form the base of the stalk. L10 forms an elongated spine to which L12 dimers bind in a sequential fashion forming a multimeric L10(L12)X complex. In terms of processing, one or more lysine residues are methylated.

In terms of biological role, forms part of the ribosomal stalk which helps the ribosome interact with GTP-bound translation factors. This is Large ribosomal subunit protein uL11 from Levilactobacillus brevis (strain ATCC 367 / BCRC 12310 / CIP 105137 / JCM 1170 / LMG 11437 / NCIMB 947 / NCTC 947) (Lactobacillus brevis).